The sequence spans 368 residues: Alanine racemase (368 aa).

Lys40 (proton acceptor; specific for D-alanine) is an active-site residue. Position 40 is an N6-(pyridoxal phosphate)lysine (Lys40). Arg134 contributes to the substrate binding site. Residue Tyr263 is the Proton acceptor; specific for L-alanine of the active site. Residue Met310 participates in substrate binding.

Belongs to the alanine racemase family. Pyridoxal 5'-phosphate serves as cofactor.

The catalysed reaction is L-alanine = D-alanine. It participates in amino-acid biosynthesis; D-alanine biosynthesis; D-alanine from L-alanine: step 1/1. Its function is as follows. Catalyzes the interconversion of L-alanine and D-alanine. May also act on other amino acids. This Listeria monocytogenes serotype 4b (strain F2365) protein is Alanine racemase (alr).